We begin with the raw amino-acid sequence, 330 residues long: D-cysteine desulfhydrase (330 aa).

Lysine 52 carries the N6-(pyridoxal phosphate)lysine modification.

The protein belongs to the ACC deaminase/D-cysteine desulfhydrase family. As to quaternary structure, homodimer. Pyridoxal 5'-phosphate is required as a cofactor.

The catalysed reaction is D-cysteine + H2O = hydrogen sulfide + pyruvate + NH4(+) + H(+). Its function is as follows. Catalyzes the alpha,beta-elimination reaction of D-cysteine and of several D-cysteine derivatives. It could be a defense mechanism against D-cysteine. The sequence is that of D-cysteine desulfhydrase from Serratia proteamaculans (strain 568).